A 416-amino-acid chain; its full sequence is UDP-N-acetylglucosamine 1-carboxyvinyltransferase (416 aa).

Residue 22–23 (KN) coordinates phosphoenolpyruvate. Arginine 91 contacts UDP-N-acetyl-alpha-D-glucosamine. Cysteine 115 acts as the Proton donor in catalysis. A 2-(S-cysteinyl)pyruvic acid O-phosphothioketal modification is found at cysteine 115. UDP-N-acetyl-alpha-D-glucosamine-binding positions include 120–124 (RPVDL), aspartate 303, and isoleucine 325.

This sequence belongs to the EPSP synthase family. MurA subfamily.

The protein localises to the cytoplasm. It carries out the reaction phosphoenolpyruvate + UDP-N-acetyl-alpha-D-glucosamine = UDP-N-acetyl-3-O-(1-carboxyvinyl)-alpha-D-glucosamine + phosphate. It participates in cell wall biogenesis; peptidoglycan biosynthesis. In terms of biological role, cell wall formation. Adds enolpyruvyl to UDP-N-acetylglucosamine. This chain is UDP-N-acetylglucosamine 1-carboxyvinyltransferase, found in Oleidesulfovibrio alaskensis (strain ATCC BAA-1058 / DSM 17464 / G20) (Desulfovibrio alaskensis).